A 375-amino-acid chain; its full sequence is N-acetyldiaminopimelate deacetylase (375 aa).

The active site involves aspartate 69. Residue glutamate 128 is the Proton acceptor of the active site.

It belongs to the peptidase M20A family. N-acetyldiaminopimelate deacetylase subfamily.

It carries out the reaction N-acetyl-(2S,6S)-2,6-diaminopimelate + H2O = (2S,6S)-2,6-diaminopimelate + acetate. It functions in the pathway amino-acid biosynthesis; L-lysine biosynthesis via DAP pathway; LL-2,6-diaminopimelate from (S)-tetrahydrodipicolinate (acetylase route): step 3/3. In terms of biological role, catalyzes the conversion of N-acetyl-diaminopimelate to diaminopimelate and acetate. In Streptococcus suis (strain 05ZYH33), this protein is N-acetyldiaminopimelate deacetylase.